The primary structure comprises 257 residues: UPF0246 protein A1S_2267 (257 aa).

It belongs to the UPF0246 family.

The chain is UPF0246 protein A1S_2267 from Acinetobacter baumannii (strain ATCC 17978 / DSM 105126 / CIP 53.77 / LMG 1025 / NCDC KC755 / 5377).